The chain runs to 311 residues: Putative RNA-binding protein R05D3.8 (311 aa).

One can recognise an RRM domain in the interval 155–235; the sequence is KRLFVSYFPL…RRAVLKESVK (81 aa). Residues 261–270 are compositionally biased toward polar residues; that stretch reads TPSRPVTSVH. The disordered stretch occupies residues 261–311; it reads TPSRPVTSVHASSSASSNHYDPSAAAGYAPLYHQPPESDPLSQCGYGPRKW.

This is Putative RNA-binding protein R05D3.8 from Caenorhabditis elegans.